A 752-amino-acid chain; its full sequence is Coiled-coil domain-containing protein 157 (752 aa).

Residues glutamine 135–threonine 154 are compositionally biased toward polar residues. Disordered stretches follow at residues glutamine 135–proline 163 and glutamine 316–leucine 336. Coiled coils occupy residues alanine 276–alanine 544 and aspartate 579–glutamine 615. The segment covering glutamine 316–alanine 329 has biased composition (basic and acidic residues). 2 disordered regions span residues leucine 620 to lysine 707 and arginine 731 to methionine 752. Residues serine 628–proline 648 are compositionally biased toward polar residues. Pro residues predominate over residues threonine 671 to glutamine 692. Polar residues predominate over residues proline 693–lysine 707.

The polypeptide is Coiled-coil domain-containing protein 157 (CCDC157) (Homo sapiens (Human)).